A 457-amino-acid polypeptide reads, in one-letter code: C4-dicarboxylate transport protein (457 aa).

The next 9 helical transmembrane spans lie at 22–42, 55–75, 90–110, 138–158, 168–188, 209–229, 242–262, 335–357, and 376–396; these read FQVV…PAFA, LVKM…IAGM, VYFL…AHVV, LTLV…AFTG, GPNI…LALV, LVHI…AFTI, WLVG…LGVV, LFIA…LAVA, and AATL…ILGV.

The protein belongs to the dicarboxylate/amino acid:cation symporter (DAACS) (TC 2.A.23) family.

It is found in the cell inner membrane. In terms of biological role, responsible for the transport of dicarboxylates such as succinate, fumarate, and malate from the periplasm across the membrane. This Xanthomonas oryzae pv. oryzae (strain MAFF 311018) protein is C4-dicarboxylate transport protein.